Here is a 372-residue protein sequence, read N- to C-terminus: Alanine racemase (372 aa).

The Proton acceptor; specific for D-alanine role is filled by lysine 41. Lysine 41 is modified (N6-(pyridoxal phosphate)lysine). Substrate is bound at residue arginine 139. Tyrosine 268 acts as the Proton acceptor; specific for L-alanine in catalysis. Methionine 316 provides a ligand contact to substrate.

This sequence belongs to the alanine racemase family. Pyridoxal 5'-phosphate is required as a cofactor.

It carries out the reaction L-alanine = D-alanine. Its pathway is amino-acid biosynthesis; D-alanine biosynthesis; D-alanine from L-alanine: step 1/1. Functionally, catalyzes the interconversion of L-alanine and D-alanine. May also act on other amino acids. This Borreliella burgdorferi (strain ATCC 35210 / DSM 4680 / CIP 102532 / B31) (Borrelia burgdorferi) protein is Alanine racemase (alr).